We begin with the raw amino-acid sequence, 340 residues long: Ketol-acid reductoisomerase (NADP(+)) (340 aa).

Positions 3-182 (VTMYYEEDVE…GCARVGIIET (180 aa)) constitute a KARI N-terminal Rossmann domain. NADP(+) contacts are provided by residues 26-29 (YGSQ), Arg49, Ser53, and 83-86 (DELQ). The active site involves His108. Gly134 contributes to the NADP(+) binding site. The region spanning 183-328 (TFKEETEEDL…AELRKAMPFT (146 aa)) is the KARI C-terminal knotted domain. Asp191, Glu195, Glu227, and Glu231 together coordinate Mg(2+). Residue Ser252 participates in substrate binding.

The protein belongs to the ketol-acid reductoisomerase family. Mg(2+) serves as cofactor.

It carries out the reaction (2R)-2,3-dihydroxy-3-methylbutanoate + NADP(+) = (2S)-2-acetolactate + NADPH + H(+). It catalyses the reaction (2R,3R)-2,3-dihydroxy-3-methylpentanoate + NADP(+) = (S)-2-ethyl-2-hydroxy-3-oxobutanoate + NADPH + H(+). It participates in amino-acid biosynthesis; L-isoleucine biosynthesis; L-isoleucine from 2-oxobutanoate: step 2/4. The protein operates within amino-acid biosynthesis; L-valine biosynthesis; L-valine from pyruvate: step 2/4. Its function is as follows. Involved in the biosynthesis of branched-chain amino acids (BCAA). Catalyzes an alkyl-migration followed by a ketol-acid reduction of (S)-2-acetolactate (S2AL) to yield (R)-2,3-dihydroxy-isovalerate. In the isomerase reaction, S2AL is rearranged via a Mg-dependent methyl migration to produce 3-hydroxy-3-methyl-2-ketobutyrate (HMKB). In the reductase reaction, this 2-ketoacid undergoes a metal-dependent reduction by NADPH to yield (R)-2,3-dihydroxy-isovalerate. The sequence is that of Ketol-acid reductoisomerase (NADP(+)) from Lactococcus lactis subsp. cremoris (strain SK11).